Consider the following 326-residue polypeptide: N-acetyl-gamma-glutamyl-phosphate reductase (326 aa).

C155 is a catalytic residue.

This sequence belongs to the NAGSA dehydrogenase family. Type 1 subfamily.

It is found in the cytoplasm. The enzyme catalyses N-acetyl-L-glutamate 5-semialdehyde + phosphate + NADP(+) = N-acetyl-L-glutamyl 5-phosphate + NADPH + H(+). It participates in amino-acid biosynthesis; L-arginine biosynthesis; N(2)-acetyl-L-ornithine from L-glutamate: step 3/4. Functionally, catalyzes the NADPH-dependent reduction of N-acetyl-5-glutamyl phosphate to yield N-acetyl-L-glutamate 5-semialdehyde. This is N-acetyl-gamma-glutamyl-phosphate reductase from Shewanella loihica (strain ATCC BAA-1088 / PV-4).